A 532-amino-acid chain; its full sequence is Intercellular adhesion molecule 1 (532 aa).

An N-terminal signal peptide occupies residues 1 to 27 (MAPSGPQPALPILVVLLGALLLGPGNA). The Extracellular segment spans residues 28-480 (QTSVFPPEVI…TVNVLSPRYE (453 aa)). Ig-like C2-type domains are found at residues 41–103 (GGSV…QSSA) and 128–193 (GKNL…LDLR). Asn-47 is a glycosylation site (N-linked (GlcNAc...) asparagine). 2 disulfides stabilise this stretch: Cys-48/Cys-92 and Cys-52/Cys-96. 2 N-linked (GlcNAc...) asparagine glycosylation sites follow: Asn-130 and Asn-145. A disulfide bridge links Cys-135 with Cys-186. The Cell attachment site; atypical motif lies at 152-154 (RGE). Residues Asn-183, Asn-202, Asn-267, Asn-296, and Asn-316 are each glycosylated (N-linked (GlcNAc...) asparagine). Positions 230–297 (DTQGTVVCSL…LLCGVMLGNQ (68 aa)) constitute an Ig-like C2-type 3 domain. A disulfide bridge links Cys-237 with Cys-290. In terms of domain architecture, Ig-like C2-type 4 spans 325–378 (GTEVIVECEAHPRAKVMLNGVPAQPPGPRAQFLLKATPEDNGRSFSCSATLEVA). Cys-332 and Cys-371 are oxidised to a cystine. Residues Asn-385 and Asn-406 are each glycosylated (N-linked (GlcNAc...) asparagine). 3 disulfide bridges follow: Cys-403–Cys-419, Cys-419–Cys-457, and Cys-431–Cys-457. Positions 412–464 (NSQQTPMCQAWGNPLPQLKCLKDGTFPLPIGQSVTVTRDLEGTYLCQARSTRG) constitute an Ig-like C2-type 5 domain. A helical transmembrane segment spans residues 481-503 (VVIIPVVAAAVILGTAGVATYLY). At 504 to 532 (NRQRKIRKYRLQQAQNGTPMKPNTQATPP) the chain is on the cytoplasmic side. A disordered region spans residues 513-532 (RLQQAQNGTPMKPNTQATPP). Positions 515 to 532 (QQAQNGTPMKPNTQATPP) are enriched in polar residues. A phosphothreonine mark is found at Thr-521 and Thr-530.

It belongs to the immunoglobulin superfamily. ICAM family. As to quaternary structure, homodimer. Interacts with MUC1 and promotes cell aggregation in epithelial cells. Interacts with ARHGEF26/SGEF. Interacts (on T cell side) with CD81, CD247 and CD9 at immunological synapses between antigen-presenting cells and T cells. In terms of processing, monoubiquitinated, which is promoted by MARCH9 and leads to endocytosis.

It localises to the membrane. In terms of biological role, ICAM proteins are ligands for the leukocyte adhesion protein LFA-1 (integrin alpha-L/beta-2). During leukocyte trans-endothelial migration, ICAM1 engagement promotes the assembly of endothelial apical cups through ARHGEF26/SGEF and RHOG activation. The sequence is that of Intercellular adhesion molecule 1 (ICAM1) from Macaca mulatta (Rhesus macaque).